We begin with the raw amino-acid sequence, 1968 residues long: Signal element on autosome protein 2 (1968 aa).

Positions 72–88 (TSSSFSSSLATTTTTSS) are enriched in low complexity. Disordered regions lie at residues 72–252 (TSSS…TPTQ) and 271–364 (QVQQ…VQEQ). Over residues 107-119 (SHHHPSSSHHHHP) the composition is skewed to basic residues. Composition is skewed to low complexity over residues 120–134 (GQQQSSSSSSSSHLQ), 144–165 (HPYYHQQQPQHQHQQAQQYGQA), 219–232 (DQPSSSTGSSLPPL), and 298–338 (LSSI…SSSS). The segment covering 346–362 (PNASSSSLIKRQSQDVQ) has biased composition (polar residues). The segment at 413–440 (YQCPNCNRNLANARNLQRHRQTCGSAQH) adopts a C2H2-type 1 zinc-finger fold. Disordered regions lie at residues 451 to 499 (RSPP…LYSP) and 538 to 601 (WSRD…TLDP). Over residues 452-467 (SPPPCASAPPVAPPTA) the composition is skewed to pro residues. Residues 472–482 (FQHHNSTGNLT) show a composition bias toward polar residues. The segment covering 483–498 (LSYSSSSSRHQSSLYS) has biased composition (low complexity). Residues 570 to 594 (PLHHLDSFDSADHRKETPRECHEPD) are compositionally biased toward basic and acidic residues. Residues 651–672 (FTCEACKKSVSSERSLRRHYNT) form a C2H2-type 2; degenerate zinc finger. Disordered regions lie at residues 681–712 (AASGEERPPTTKRKPATKRPSKKKEASEGPEK) and 785–854 (VTSA…TGNP). The segment covering 690–702 (TTKRKPATKRPSK) has biased composition (basic residues). Low complexity predominate over residues 794–804 (HQLPHQQPQQQ). A compositionally biased stretch (acidic residues) spans 812 to 824 (LLNEQDESADDDG). Residues 827–851 (RSSSGTVSNSTTTTTTATTTSSKST) are compositionally biased toward low complexity. The C2H2-type 3; degenerate zinc finger occupies 856–875 (FTCEHCARQLCSMSNLKRHR). 4 disordered regions span residues 882 to 905 (ASSSSNSAASRPPSQPSTPATAPA), 975 to 1069 (GDAL…EHKN), 1083 to 1227 (RMDA…SPLD), and 1246 to 1273 (PGPLEQGQSSVDSQSTAEPSPRKASQQA). Composition is skewed to low complexity over residues 981–1015 (QQHQQKMDQQIQIQFQQQQQQRFQHHQQQQQAGRI), 1023–1046 (ILNQVQNPPQQVQHNQHQNQMLNP), and 1108–1131 (PQRSQAPAPSRQQQQQPPVAYQVQ). Over residues 1136–1146 (PLPPMQLPPLQ) the composition is skewed to pro residues. Low complexity predominate over residues 1147–1185 (NPHNQQQQHQMLHQSQMNYQQVQQVQQVQHVQQQQNLQN). 2 stretches are compositionally biased toward polar residues: residues 1201 to 1211 (APGNRSRSHSN) and 1251 to 1273 (QGQSSVDSQSTAEPSPRKASQQA). The segment at 1274–1297 (YICPECKKTYASRKNVKRHRMAVH) adopts a C2H2-type 4 zinc-finger fold. Disordered regions lie at residues 1333-1478 (TPDS…ADEE), 1569-1608 (SVGLPSLASPGEQFGYQQYSQHPQQHPQQHPQQHPQQQQQ), 1624-1671 (HPPM…LTCS), and 1769-1822 (ADRQ…PSTN). Residues 1388–1403 (ERQEPPKKPVADDHKS) show a composition bias toward basic and acidic residues. 2 stretches are compositionally biased toward pro residues: residues 1407 to 1421 (PLPPANTIMPPPPPY) and 1429 to 1445 (LNPPRTALPPLQLPPLQ). Residues 1589 to 1608 (QHPQQHPQQHPQQHPQQQQQ) show a composition bias toward low complexity. Over residues 1624 to 1633 (HPPMPVSQQF) the composition is skewed to polar residues. The segment at 1668-1694 (LTCSGCKKILGSDYSLRRHRAGCADVQ) adopts a C2H2-type 5; degenerate zinc-finger fold. Residues 1800–1811 (SSSSSSSTSSAS) are compositionally biased toward low complexity. A C2H2-type 6 zinc finger spans residues 1826 to 1858 (HYCQFPECGKNFSSEWNLARHTRESCKMTTRAH).

Expressed in seam cells, intestine cells, pharyngeal muscles and nerve ring neurons.

The protein localises to the nucleus. Its subcellular location is the cytoplasm. Functionally, RNA-binding protein, which regulates the expression of proteins required to control developmental timing of events during the L2 to L3 larval stage switch. Binds to the 3'UTR of the transcript of the heterochronic protein lin-28 to post-transcriptionally negatively regulate its expression in certain tissue types in the later larval stages. During larval development, controls the timing of seam cell division and terminal differentiation into adult alae. In vitro, it can also bind to DNA through its first zinc finger. May bind directly or indirectly to the promoter of the sex-determining factor xol-1 to activate its transcription. Its activation of xol-1 transcription controls sex determination and X chromosome dosage compensation to promote male development. Through the negative regulation of lin-28 transcript, it also has a role in the fox-1-sex-1-mediated determination of sexual fate. Acts in the intestine to play a role in regulating adult lifespan. The sequence is that of Signal element on autosome protein 2 from Caenorhabditis elegans.